The primary structure comprises 435 residues: Glutamyl-tRNA reductase (435 aa).

Residues 49 to 52 (TCNR), serine 118, 123 to 125 (EPQ), and glutamine 129 each bind substrate. The active-site Nucleophile is cysteine 50. 203 to 208 (GAGETI) lines the NADP(+) pocket.

This sequence belongs to the glutamyl-tRNA reductase family. In terms of assembly, homodimer.

The enzyme catalyses (S)-4-amino-5-oxopentanoate + tRNA(Glu) + NADP(+) = L-glutamyl-tRNA(Glu) + NADPH + H(+). The protein operates within porphyrin-containing compound metabolism; protoporphyrin-IX biosynthesis; 5-aminolevulinate from L-glutamyl-tRNA(Glu): step 1/2. Catalyzes the NADPH-dependent reduction of glutamyl-tRNA(Glu) to glutamate 1-semialdehyde (GSA). The polypeptide is Glutamyl-tRNA reductase (Glaesserella parasuis serovar 5 (strain SH0165) (Haemophilus parasuis)).